Consider the following 186-residue polypeptide: Peptide deformylase (186 aa).

Fe cation is bound by residues Cys113 and His156. Glu157 is an active-site residue. His160 provides a ligand contact to Fe cation.

This sequence belongs to the polypeptide deformylase family. Fe(2+) is required as a cofactor.

It carries out the reaction N-terminal N-formyl-L-methionyl-[peptide] + H2O = N-terminal L-methionyl-[peptide] + formate. Its function is as follows. Removes the formyl group from the N-terminal Met of newly synthesized proteins. Requires at least a dipeptide for an efficient rate of reaction. N-terminal L-methionine is a prerequisite for activity but the enzyme has broad specificity at other positions. This chain is Peptide deformylase, found in Ligilactobacillus salivarius (strain UCC118) (Lactobacillus salivarius).